A 240-amino-acid polypeptide reads, in one-letter code: Probable transcriptional activator (240 aa).

The tract at residues 17–28 (CTSCQARHGVVC) is essential for the oxygen-regulated activity. One can recognise an HTH crp-type domain in the interval 158–232 (RTAEEKVASL…FRHIIVPDMD (75 aa)). The H-T-H motif DNA-binding region spans 191 to 210 (RAEIADFLGLTIETVSRQMT).

Promotes the microaerobic and symbiotic induction of fixN, possibly by binding to the FNR consensus binding site upstream of fixN. The sequence is that of Probable transcriptional activator (fnrN) from Rhizobium leguminosarum bv. viciae.